We begin with the raw amino-acid sequence, 390 residues long: Protein TAB2 homolog, chloroplastic (390 aa).

The N-terminal 69 residues, 1 to 69 (MTTATAIVAG…RSISSESSTE (69 aa)), are a transit peptide targeting the chloroplast. Positions 16–85 (RRSLPLPNPP…IADEEVEAEN (70 aa)) are disordered. A compositionally biased stretch (low complexity) spans 61 to 75 (SISSESSTEASAAAD).

The protein localises to the plastid. Its subcellular location is the chloroplast. In terms of biological role, nuclear genome-encoded factor involved in the biogenesis of photosystem I (PSI). Required for the accumulation of PSI during plant development. Does not seem to be required for the translation of mRNAs of the PSI subunits. The sequence is that of Protein TAB2 homolog, chloroplastic from Zea mays (Maize).